The primary structure comprises 96 residues: Co-chaperonin GroES (96 aa).

The protein belongs to the GroES chaperonin family. As to quaternary structure, heptamer of 7 subunits arranged in a ring. Interacts with the chaperonin GroEL.

Its subcellular location is the cytoplasm. Functionally, together with the chaperonin GroEL, plays an essential role in assisting protein folding. The GroEL-GroES system forms a nano-cage that allows encapsulation of the non-native substrate proteins and provides a physical environment optimized to promote and accelerate protein folding. GroES binds to the apical surface of the GroEL ring, thereby capping the opening of the GroEL channel. This Wolbachia sp. subsp. Drosophila simulans (strain wRi) protein is Co-chaperonin GroES.